A 605-amino-acid chain; its full sequence is Sodium-independent sulfate anion transporter (605 aa).

The Extracellular segment spans residues 1–50 (MPSSLKGLGQAWLSSSSMALSACCSVSAWQKRLPVLAWLPRYSLQWLKMD). The chain crosses the membrane as a helical span at residues 51-71 (FIAGLSVGLTVIPQALAYAEV). Position 72 (Ala-72) is a topological domain, cytoplasmic. A helical membrane pass occupies residues 73–93 (GLPPQYGLYSAFTGCFVYVFL). Residues 94 to 98 (GTSRD) lie on the Extracellular side of the membrane. A helical membrane pass occupies residues 99 to 119 (VTLGPTAIMSLLVSFYTFHEP). Topologically, residues 120–122 (AYA) are cytoplasmic. Residues 123 to 143 (VLLTFLSGCIQLAMGLLHLGF) form a helical membrane-spanning segment. The Extracellular portion of the chain corresponds to 144–146 (LLD). A helical membrane pass occupies residues 147–167 (FISCPVIKGFTSAAAIIIGFG). Residues 168–196 (QIKNLLGLHNIPRQFFLQVYHTFLSVGET) are Cytoplasmic-facing. Residues 197–217 (RLGDAILGLVCMVLLLVLKLM) traverse the membrane as a helical segment. The Extracellular segment spans residues 218-249 (RDRIPPVHPEMPLCVRLSCGLVWTTATARNAL). Residues 250-270 (VVSFAALVAYSFEVTGYQPFI) form a helical membrane-spanning segment. The Cytoplasmic segment spans residues 271 to 303 (LTGEIAKGLPPVRVPPFSVTMANGTVSFTRMVQ). Residues 304-324 (DLGAGLAVVPLIGLLESIAVA) traverse the membrane as a helical segment. Residues 325–340 (KAFASQNDYHVDANQE) lie on the Extracellular side of the membrane. The chain crosses the membrane as a helical span at residues 341–361 (LLAIGLTNMLGSFVSSYPITG). Over 362 to 373 (SFGRTAVNAQSG) the chain is Cytoplasmic. Residues 374 to 394 (VCTPAGGLVTGALVLLSLDYL) form a helical membrane-spanning segment. At 395–397 (TSL) the chain is on the extracellular side. A helical membrane pass occupies residues 398–418 (FYYIPKAALAAVIIMAVVPLF). At 419–447 (DTKIFGMLWRVKRLDLLPLCATFLLCFWE) the chain is on the cytoplasmic side. A helical membrane pass occupies residues 448-468 (VQYGILAGTLVSTLFLLHFVA). Residues 469–605 (RPKTQVSEGP…PEHKVTLLTA (137 aa)) lie on the Extracellular side of the membrane. Residues 479 to 582 (VLILQLASGL…EKAEQYVRQE (104 aa)) enclose the STAS domain.

The protein belongs to the SLC26A/SulP transporter (TC 2.A.53) family.

Its subcellular location is the cell membrane. The protein localises to the lysosome membrane. The protein resides in the apical cell membrane. It localises to the basolateral cell membrane. The catalysed reaction is hydrogencarbonate(in) + chloride(out) = hydrogencarbonate(out) + chloride(in). The enzyme catalyses sulfate(in) + H(+)(in) = sulfate(out) + H(+)(out). It catalyses the reaction oxalate(in) + chloride(out) = oxalate(out) + chloride(in). Sodium-independent anion exchanger mediating bicarbonate, chloride, sulfate and oxalate transport. Exhibits sodium-independent sulfate anion transporter activity that may cooperate with SLC26A2 to mediate DIDS-sensitive sulfate uptake into high endothelial venules endothelial cells (HEVEC). In the kidney, mediates chloride-bicarbonate exchange, facilitating V-ATPase-mediated acid secretion. May function as a chloride channel, playing an important role in moderating chloride homeostasis and neuronal activity in the cerebellum. This is Sodium-independent sulfate anion transporter (Slc26a11) from Cavia porcellus (Guinea pig).